Reading from the N-terminus, the 315-residue chain is 10-epi-cubebol synthase (315 aa).

Residues D79, N220, S224, and E228 each coordinate Mg(2+). A DDXXD motif motif is present at residues 79 to 83 (DDVCE). An NXXXSXXXE motif motif is present at residues 220–228 (NDIYSLRKE).

This sequence belongs to the terpene synthase family. Requires Mg(2+) as cofactor.

The enzyme catalyses (2E,6E)-farnesyl diphosphate + H2O = 10-epi-cubebol + diphosphate. Catalyzes the cyclization of farnesyl diphosphate (FPP) to 10-epi-cubebol. Is also responsible for the formation of many other sesquiterpenes, mainly cadalanes and cubebanes, including 1,10-di-epi-cubebol and the cadalanes delta-cadinene, T-cadinol and alpha-cadinol. In Sorangium cellulosum (strain So ce56) (Polyangium cellulosum (strain So ce56)), this protein is 10-epi-cubebol synthase.